The chain runs to 312 residues: Taste receptor type 2 member 9 (312 aa).

Residues 1–9 (MPSAIEAIY) lie on the Extracellular side of the membrane. Residues 10–32 (IILIAGELTIGIWGNGFIVLVNC) traverse the membrane as a helical segment. At 33–52 (XDWLKRRDISLIDIILISLA) the chain is on the cytoplasmic side. The chain crosses the membrane as a helical span at residues 53–72 (ISRICLLCVISLDGFFMLLF). At 73-86 (PGTYGNSVLVSIVN) the chain is on the extracellular side. Residues 87 to 109 (VVWTFANNSSLWFTSCLSIFYLL) form a helical membrane-spanning segment. Residues 110–128 (KIANISHPFFFWLKLKINK) are Cytoplasmic-facing. The helical transmembrane segment at 129–146 (VMLAILLGSFLISLIISV) threads the bilayer. Residues 147-180 (XKNDDMWYHLFKVSXEENITWEFKVSKIPGTFKQ) lie on the Extracellular side of the membrane. Asn164 is a glycosylation site (N-linked (GlcNAc...) asparagine). A helical transmembrane segment spans residues 181 to 203 (LTLNLGGRVPFILCLISFFLLLF). Residues 204–234 (SLVRHTKQIQLHATGFRDPSTEAHMRAIKAV) are Cytoplasmic-facing. A helical membrane pass occupies residues 235 to 257 (IIFLLLLIVYYPVFLVMTSSALI). Over 258 to 261 (PQGK) the chain is Extracellular. A helical membrane pass occupies residues 262–284 (LVLMIGDIVTVIFPSSHSFILIM). Residues 285 to 312 (GNSKLREAFLKMLRFVKGFLRRRKPFVP) are Cytoplasmic-facing.

It belongs to the G-protein coupled receptor T2R family.

It localises to the membrane. Functionally, gustducin-coupled receptor implicated in the perception of bitter compounds in the oral cavity and the gastrointestinal tract. Signals through PLCB2 and the calcium-regulated cation channel TRPM5. This Pan troglodytes (Chimpanzee) protein is Taste receptor type 2 member 9 (TAS2R9).